Here is a 276-residue protein sequence, read N- to C-terminus: Phosphatidylglycerol--prolipoprotein diacylglyceryl transferase (276 aa).

Transmembrane regions (helical) follow at residues 17–37, 59–79, 94–114, 132–152, 177–197, 208–225, and 235–255; these read FGPF…VLGW, FLSW…ILFY, VWDG…AILI, VPVP…GELW, PSEL…LLIA, GYLG…RTTA, and LGYL…MIVI. Residue arginine 142 coordinates a 1,2-diacyl-sn-glycero-3-phospho-(1'-sn-glycerol).

Belongs to the Lgt family.

It localises to the cell inner membrane. The catalysed reaction is L-cysteinyl-[prolipoprotein] + a 1,2-diacyl-sn-glycero-3-phospho-(1'-sn-glycerol) = an S-1,2-diacyl-sn-glyceryl-L-cysteinyl-[prolipoprotein] + sn-glycerol 1-phosphate + H(+). It functions in the pathway protein modification; lipoprotein biosynthesis (diacylglyceryl transfer). Its function is as follows. Catalyzes the transfer of the diacylglyceryl group from phosphatidylglycerol to the sulfhydryl group of the N-terminal cysteine of a prolipoprotein, the first step in the formation of mature lipoproteins. In Acidiphilium cryptum (strain JF-5), this protein is Phosphatidylglycerol--prolipoprotein diacylglyceryl transferase.